We begin with the raw amino-acid sequence, 564 residues long: MQHETKMENQSWLKKLARRLGPGHIVNLCFIVVLLFSTLLTWREVVVLEDAYISSQRNHLENVANALDKHLQYNVDKLIFLRNGMREALIAPLDFTSLRDAVTEFEQHRDEHAWQIELNRRRTLPVNGVSDALVSEGNLLSRENESLDNEITAALEVGYLLRLAHNSSSMVEQAMYVSRAGFYVSTQPTLFTRNVPTRYYGYVTQPWFIGHSQRENRHRAVRWFTSQPEHASNTEPQVTVSVPVDSNNYWYGVLGMSIPVRTMQQFLRNAIDKNLDGEYQLYDSKLRFLTSSNPDHPTGNIFDPRELAFLAQAMEHDTRGGIRMDSRYVSWERLDHFDGVLVRVHTLSEGVRGDFGSISIALTLLWALFTTMLLISWYVIRRMVSNMYVLQSSLQWQAWHDTLTRLYNRGALFEKARPLAKLCQTHQHPFSVIQVDLDHFKAINDRFGHQAGDRVLSHAAGLISSSLRAQDVAGRVGGEEFCVILPGASLTEAAEVAERIRLKLNEKEMLIAKSTTIRISASLGVSSSEETGDYDFEQLQSLADRRLYLAKQAGRNRVFASDNT.

2 helical membrane passes run 20–40 (LGPG…STLL) and 360–380 (IALT…WYVI). The 136-residue stretch at 428–563 (HPFSVIQVDL…GRNRVFASDN (136 aa)) folds into the GGDEF domain. Asp-436 provides a ligand contact to Mg(2+). Substrate is bound by residues Asn-444, His-449, and Asp-453. Glu-479 provides a ligand contact to Mg(2+). Residue Glu-479 is the Proton acceptor of the active site.

In terms of assembly, homodimer. Mg(2+) is required as a cofactor.

Its subcellular location is the cell inner membrane. The catalysed reaction is 2 GTP = 3',3'-c-di-GMP + 2 diphosphate. It participates in glycan metabolism; bacterial cellulose biosynthesis. The protein operates within purine metabolism; 3',5'-cyclic di-GMP biosynthesis. In terms of biological role, catalyzes the synthesis of cyclic-di-GMP (c-di-GMP) via the condensation of 2 GTP molecules. Cyclic-di-GMP is a second messenger which controls cell surface-associated traits in bacteria. Involved in the regulation of cellulose production. The sequence is that of Probable diguanylate cyclase DgcQ from Shigella dysenteriae serotype 1 (strain Sd197).